A 261-amino-acid polypeptide reads, in one-letter code: Putative ankyrin repeat protein L99 (261 aa).

7 ANK repeats span residues 21–50, 51–80, 81–110, 112–140, 142–170, 171–203, and 231–259; these read KVNP…DVHA, HEDY…NIHS, DRDL…NVNA, QNSA…NIHA, NNFC…DINA, DNGA…IDNC, and NELK…NINS.

This is Putative ankyrin repeat protein L99 from Acanthamoeba polyphaga (Amoeba).